Here is a 319-residue protein sequence, read N- to C-terminus: Malate dehydrogenase (319 aa).

NAD(+)-binding positions include 10-15 (GAGNIG) and aspartate 34. 2 residues coordinate substrate: arginine 83 and arginine 89. Residues asparagine 96 and 119 to 121 (ITN) each bind NAD(+). Residues asparagine 121 and arginine 152 each contribute to the substrate site. The active-site Proton acceptor is histidine 176.

Belongs to the LDH/MDH superfamily. MDH type 3 family.

It carries out the reaction (S)-malate + NAD(+) = oxaloacetate + NADH + H(+). Its function is as follows. Catalyzes the reversible oxidation of malate to oxaloacetate. The polypeptide is Malate dehydrogenase (Francisella novicida).